A 40-amino-acid polypeptide reads, in one-letter code: MTDTTGRIPLWMIGTLAGILVISLIGIFFYGSYSGLGSSL.

The helical transmembrane segment at 8 to 28 (IPLWMIGTLAGILVISLIGIF) threads the bilayer.

It belongs to the PsbJ family. PSII is composed of 1 copy each of membrane proteins PsbA, PsbB, PsbC, PsbD, PsbE, PsbF, PsbH, PsbI, PsbJ, PsbK, PsbL, PsbM, PsbT, PsbX, PsbY, PsbZ, Psb30/Ycf12, at least 3 peripheral proteins of the oxygen-evolving complex and a large number of cofactors. It forms dimeric complexes.

Its subcellular location is the plastid membrane. One of the components of the core complex of photosystem II (PSII). PSII is a light-driven water:plastoquinone oxidoreductase that uses light energy to abstract electrons from H(2)O, generating O(2) and a proton gradient subsequently used for ATP formation. It consists of a core antenna complex that captures photons, and an electron transfer chain that converts photonic excitation into a charge separation. The chain is Photosystem II reaction center protein J from Cuscuta gronovii (Common dodder).